Consider the following 71-residue polypeptide: Small ribosomal subunit protein bS21 (71 aa).

Belongs to the bacterial ribosomal protein bS21 family.

The polypeptide is Small ribosomal subunit protein bS21 (Alteromonas mediterranea (strain DSM 17117 / CIP 110805 / LMG 28347 / Deep ecotype)).